The sequence spans 300 residues: Cation-efflux pump FieF (300 aa).

4 helical membrane-spanning segments follow: residues 12-32 (AAIAATAMASLLLLIKIFAWW), 39-59 (ILAALVDSLVDIGASLTNLLV), 82-102 (AALAQSMFISGSALFLFLTGI), and 114-134 (PGVGVIVTIVALICTIILVSF). Zn(2+)-binding residues include Asp45 and Asp49. Residues His153 and Asp157 each contribute to the Zn(2+) site. Helical transmembrane passes span 156-176 (SDVMMNGAILLALGLSWYGWH) and 178-198 (ADALFALGIGIYILYSALRMG).

It belongs to the cation diffusion facilitator (CDF) transporter (TC 2.A.4) family. FieF subfamily. Homodimer.

It localises to the cell inner membrane. The catalysed reaction is Zn(2+)(in) + H(+)(out) = Zn(2+)(out) + H(+)(in). It catalyses the reaction Cd(2+)(in) + H(+)(out) = Cd(2+)(out) + H(+)(in). The enzyme catalyses Fe(2+)(in) + H(+)(out) = Fe(2+)(out) + H(+)(in). Functionally, divalent metal cation transporter which exports Zn(2+), Cd(2+) and possibly Fe(2+). May be involved in zinc and iron detoxification by efflux. The protein is Cation-efflux pump FieF of Escherichia coli O7:K1 (strain IAI39 / ExPEC).